Here is a 265-residue protein sequence, read N- to C-terminus: Glycine/sarcosine N-methyltransferase (265 aa).

S-adenosyl-L-methionine contacts are provided by residues tyrosine 28, tryptophan 36, arginine 45, alanine 69, aspartate 90, 116 to 117 (DW), and leucine 134. Positions 136, 169, and 208 each coordinate substrate.

The protein belongs to the class I-like SAM-binding methyltransferase superfamily. Glycine N-methyltransferase family. Monomer.

It catalyses the reaction glycine + 2 S-adenosyl-L-methionine = N,N-dimethylglycine + 2 S-adenosyl-L-homocysteine + 2 H(+). The enzyme catalyses glycine + S-adenosyl-L-methionine = sarcosine + S-adenosyl-L-homocysteine + H(+). The catalysed reaction is sarcosine + S-adenosyl-L-methionine = N,N-dimethylglycine + S-adenosyl-L-homocysteine + H(+). Its pathway is amine and polyamine biosynthesis; betaine biosynthesis via glycine pathway; betaine from glycine: step 1/3. It participates in amine and polyamine biosynthesis; betaine biosynthesis via glycine pathway; betaine from glycine: step 2/3. Its activity is regulated as follows. Inhibited by acetate, dimethylglycine and S-adenosyl-L-homocysteine. Its function is as follows. Catalyzes the methylation of glycine and sarcosine to sarcosine and dimethylglycine, respectively, with S-adenosylmethionine (AdoMet) acting as the methyl donor. This chain is Glycine/sarcosine N-methyltransferase, found in Aphanothece halophytica.